The following is a 143-amino-acid chain: Transcriptional regulator SlyA (143 aa).

One can recognise an HTH marR-type domain in the interval 2-135; sequence ESTLGSDLAR…LSTLVQKLEQ (134 aa). A DNA-binding region (H-T-H motif) is located at residues 49–72; sequence QIQLAKAIGIEQPSLVRTLDQLEE.

It belongs to the SlyA family. As to quaternary structure, homodimer.

Its function is as follows. Transcription regulator that can specifically activate or repress expression of target genes. Regulates the cpm operon, which contains cpmA, cpmB, cpmC, cpmD, cpmE, cpmF, cpmG and cpmH, involved in carbapenem-like antibiotic production. This Photorhabdus laumondii subsp. laumondii (strain DSM 15139 / CIP 105565 / TT01) (Photorhabdus luminescens subsp. laumondii) protein is Transcriptional regulator SlyA.